The sequence spans 421 residues: Fasciclin-like arabinogalactan protein ARB_02922 (421 aa).

Residues 1 to 17 (MLLYYILVALWATVTYA) form the signal peptide. FAS1 domains are found at residues 18-167 (KSFS…DRPL) and 169-296 (LPQS…SDVL). N-linked (GlcNAc...) asparagine glycans are attached at residues N52, N75, N80, N120, N145, N181, N223, and N300. A disordered region spans residues 300–401 (NDTAKPVPNA…NTPQPGAAAT (102 aa)). Composition is skewed to gly residues over residues 344–356 (TSGG…GGGE) and 372–387 (SGGG…GGPG). A compositionally biased stretch (low complexity) spans 388–401 (PTATNTPQPGAAAT). The GPI-anchor amidated glycine moiety is linked to residue G397. Positions 398–421 (AAATERAKAGLAAVVGLGVVLINA) are cleaved as a propeptide — removed in mature form.

This sequence belongs to the fasciclin-like AGP family.

It is found in the cell membrane. Functionally, may be a cell surface adhesion protein. The chain is Fasciclin-like arabinogalactan protein ARB_02922 from Arthroderma benhamiae (strain ATCC MYA-4681 / CBS 112371) (Trichophyton mentagrophytes).